A 308-amino-acid polypeptide reads, in one-letter code: MDAVTTYEVFSAAQWAGLRAATPLPLTEGDLMVLRGLNERLSLDEVATIYLPLSRLLNLHVGAAQQLRRVKDTFLGRPVGRRPFVIGIAGSVAVGKSTTARVLQALLARWPDHPRVDLVTTDGFLYPNAVLASRAGLHRKGFPESYDLRRLVQFLADLEAGVEAIDVPVYSHATYDVVAGKAQTVRQPDIVILEGLNVLQGPERAAAIAVSDFFDLGIYVHADEADLERWYIERFLTLRATAFRDPSSYFHRYAAMGDDEARAFALQIWRTINGPNLTENILPTRARADVVLEKGPDHAVRAVHLRRL.

Residue 90 to 97 participates in ATP binding; the sequence is GSVAVGKS.

This sequence belongs to the prokaryotic pantothenate kinase family.

Its subcellular location is the cytoplasm. It catalyses the reaction (R)-pantothenate + ATP = (R)-4'-phosphopantothenate + ADP + H(+). Its pathway is cofactor biosynthesis; coenzyme A biosynthesis; CoA from (R)-pantothenate: step 1/5. The chain is Pantothenate kinase from Sorangium cellulosum (strain So ce56) (Polyangium cellulosum (strain So ce56)).